A 324-amino-acid chain; its full sequence is UDP-N-acetylenolpyruvoylglucosamine reductase (324 aa).

The 182-residue stretch at 36 to 217 (FRAGGLAELM…IRAEMDAVRA (182 aa)) folds into the FAD-binding PCMH-type domain. Residue Arg183 is part of the active site. Ser232 functions as the Proton donor in the catalytic mechanism. Residue Glu302 is part of the active site.

It belongs to the MurB family. FAD serves as cofactor.

Its subcellular location is the cytoplasm. It carries out the reaction UDP-N-acetyl-alpha-D-muramate + NADP(+) = UDP-N-acetyl-3-O-(1-carboxyvinyl)-alpha-D-glucosamine + NADPH + H(+). Its pathway is cell wall biogenesis; peptidoglycan biosynthesis. Functionally, cell wall formation. This is UDP-N-acetylenolpyruvoylglucosamine reductase from Rhizobium rhizogenes (strain K84 / ATCC BAA-868) (Agrobacterium radiobacter).